A 716-amino-acid polypeptide reads, in one-letter code: MNNFRATILFWAVAAWVTSGKPLGEMDEVGVQKCKNALKLPVLEVLPGGGWDNLRNVDMGRVMELTYSNCRTTEDGQYIIPDEIFTIPQKQSNLEMNSEILESWANYQSSTSYSINTELSLFSKVNGKFSTEFQRMKTLQLKDQAITTRVQVRNLIYTVKINPALELNWSFRKELLDISDRLENNQTRMATYLAELLVLNYGTHVITSVDAGAALIQEDHIRASFLQDSQSSRSAVTASAGLAFQNTVNFKFEENYTSQNVLTKSYLSNRTNSRVQSIGGVPFYPGITLQAWQQGITNHLVAIDRSGLPLHFFINPNMLPDLPGPLVKKVSKTVETAVKRYYTFNTYPGCTDLNSPNFNFQANTDDGSCEGKMTNFSFGGVYQECTQLSGNRDVLLCQKLEQKNPLTGDFSCPSGYSPVRLLSQIHEEGYNHLECHRKCTLLVFCKTVCEDVFQVAKAEFRAFWCVASSQVPENSGLLFGGLFSSKSINPMTNAQSCPAGYFPLSLFENLKVCVSQDYELGSRFAVPFGGFFSCTVGNPLVDPAISRDLGVPSLKKCPGGFSQHLALISDGCQVSYCVKSGLFTGGSLPPARLPPFTRPPLMSQAATNTVIVTNSENARSWIKDSQTHQWRLGEPIELRRAMNDIHGDGGGLSGGAAAGVTLGVTTILAVVITLAIYGTRKFKKKAYQAIEERQSLVPGTAATGDTTYQEQGQSPA.

The signal sequence occupies residues 1–20 (MNNFRATILFWAVAAWVTSG). Positions 30–345 (GVQKCKNALK…TAVKRYYTFN (316 aa)) constitute an MACPF domain. A disulfide bond links cysteine 34 and cysteine 70. 2 consecutive transmembrane segments (beta stranded) span residues 113 to 120 (YSINTELS) and 127 to 132 (GKFSTE). 2 N-linked (GlcNAc...) asparagine glycosylation sites follow: asparagine 168 and asparagine 185. 2 consecutive transmembrane segments (beta stranded) span residues 235 to 244 (AVTASAGLAF) and 248 to 256 (VNFKFEENY). Asparagine 269 is a glycosylation site (N-linked (GlcNAc...) asparagine). Residues cysteine 350 and cysteine 369 are joined by a disulfide bond. The N-linked (GlcNAc...) asparagine glycan is linked to asparagine 375. 5 disulfide bridges follow: cysteine 385/cysteine 397, cysteine 435/cysteine 449, cysteine 439/cysteine 445, cysteine 534/cysteine 572, and cysteine 557/cysteine 577. A P2 region spans residues 413 to 656 (PSGYSPVRLL…GDGGGLSGGA (244 aa)). A helical membrane pass occupies residues 656–676 (AAAGVTLGVTTILAVVITLAI). The segment at 693-716 (RQSLVPGTAATGDTTYQEQGQSPA) is disordered. Residues 703–716 (TGDTTYQEQGQSPA) are compositionally biased toward polar residues.

Belongs to the MPEG1 family. As to quaternary structure, homooligomer; predominantly forms a homooligomeric arc-shaped pore complex instead of complete rings of 16 subunits. Post-translationally, proteolytically processed in two steps to generate the Macrophage-expressed gene 1 protein, processed form: cleaved by trypsin in proximity of the helical transmembrane domain releases the ectodomain into the lysosomal lumen to orient the pore-forming domain toward the endogenous membranes, and processed by the asparagine endopeptidase (LGMN). Proteolytic processing in antigen-containing vesicles is pH-dependent. Monoubiquitinated in response to bacterial infection; ubiquitination is required for vesicular localization and antibacterial activity and can be blocked by bacterial cell cycle inhibiting factor (cif).

Its subcellular location is the cytoplasmic vesicle membrane. The protein localises to the cytoplasmic vesicle. The protein resides in the phagosome membrane. Forms arc- and ring-shaped pre-pores on top of the membrane at neutral to slightly acidic pH conditions and converts to pores upon acidification. Undergoes transition from the pre-pore to the pore in a processive clockwise hand-over-hand process. In the pore state, 2 alpha-helical regions refold into transmembrane hairpins (TMH1 and TMH2) in each protomer that form in the ensemble complex giant beta-barrel transmembrane pores. Its function is as follows. Pore-forming protein involved in both innate and adaptive immunity. Plays a central role in antigen cross-presentation in dendritic cells by forming a pore in antigen-containing compartments, thereby promoting delivery of antigens for cross-presentation. Also involved in innate immune response following bacterial infection; shows antibacterial activity against a wide spectrum of Gram-positive, Gram-negative and acid-fast bacteria. Reduces the viability of the intracytosolic pathogen L.monocytogenes by inhibiting acidification of the phagocytic vacuole of host cells which restricts bacterial translocation from the vacuole to the cytosol. Required for the antibacterial activity of reactive oxygen species and nitric oxide. Functionally, pore-forming protein that plays a central role in antigen cross-presentation in dendritic cells by mediating delivery of antigens for cross-presentation. Dendritic cells bridge innate and adaptive immunity by capturing exogenous antigens on MHC class-I molecules and presenting them to naive CD8(+) T-cells. Acts by forming a pore in antigen-containing compartments, promoting the release of antigens into the cytosol, enabling generation of MHCI:peptide complexes and T-cell priming. This chain is Macrophage-expressed gene 1 protein (MPEG1), found in Pongo abelii (Sumatran orangutan).